Reading from the N-terminus, the 363-residue chain is MNTWFLNVVDPLHQWFLGFGDIGVVLWTVLKILMIAIPLIVSVAFYVVWERKLIGWMHVRHGPMYVGMGLFQAFADVFKLLFKEVLYPSKAHKVIFVIAPLLTLAPSFAAWAVVPFDTKLVLSNANVGLLYLLAMTSLGVYGIILAGWASNSKYAFLGAMRSAAQVVSYEIAMGFALVGVMIAAGSLNLSQIVMAQAGSSGFFDWFLIPLFPLFIVYWVSGVAETNRSPFDVVEGESEIVAGHMVEYSGSVFALFFLAEYANMILVSFLISIFFLGGWLSPIQGWVSGQVSPLIDWVWNGGWPWLLLKVLFFASAYIWFRASFPRYRYDQIMRLGWKVFIPLTIVWIAVTALMVFSGVIQKGV.

10 consecutive transmembrane segments (helical) span residues 29-49, 62-82, 94-114, 127-147, 166-186, 202-222, 239-257, 264-286, 293-313, and 339-359; these read VLKI…YVVW, GPMY…KLLF, VIFV…WAVV, VGLL…ILAG, VVSY…AAGS, FFDW…VSGV, IVAG…LFFL, ILVS…QGWV, LIDW…LFFA, and FIPL…SGVI.

It belongs to the complex I subunit 1 family. In terms of assembly, NDH-1 is composed of 14 different subunits. Subunits NuoA, H, J, K, L, M, N constitute the membrane sector of the complex.

It localises to the cell inner membrane. It catalyses the reaction a quinone + NADH + 5 H(+)(in) = a quinol + NAD(+) + 4 H(+)(out). NDH-1 shuttles electrons from NADH, via FMN and iron-sulfur (Fe-S) centers, to quinones in the respiratory chain. The immediate electron acceptor for the enzyme in this species is believed to be ubiquinone. Couples the redox reaction to proton translocation (for every two electrons transferred, four hydrogen ions are translocated across the cytoplasmic membrane), and thus conserves the redox energy in a proton gradient. This subunit may bind ubiquinone. The chain is NADH-quinone oxidoreductase subunit H from Xylella fastidiosa (strain M12).